We begin with the raw amino-acid sequence, 429 residues long: Histidine--tRNA ligase (429 aa).

It belongs to the class-II aminoacyl-tRNA synthetase family. Homodimer.

The protein resides in the cytoplasm. The enzyme catalyses tRNA(His) + L-histidine + ATP = L-histidyl-tRNA(His) + AMP + diphosphate + H(+). The sequence is that of Histidine--tRNA ligase from Streptococcus pneumoniae serotype 2 (strain D39 / NCTC 7466).